Reading from the N-terminus, the 174-residue chain is Thiol-disulfide oxidoreductase ResA (174 aa).

The helical; Signal-anchor for type II membrane protein transmembrane segment at 11–30 (TAILLVLLAAIGYTIYTNFF) threads the bilayer. Positions 36 to 174 (VAVGSTAPDF…IERHLESIKP (139 aa)) constitute a Thioredoxin domain. A disulfide bridge connects residues Cys-74 and Cys-77.

The protein belongs to the thioredoxin family. ResA subfamily.

The protein resides in the cell membrane. The protein operates within protein modification; cytochrome c assembly. Thiol-disulfide oxidoreductase which is required in disulfide reduction during c-type cytochrome synthesis. May accept reducing equivalents from CcdA, leading to breakage of disulfide bonds in apocytochrome c; following this reduction heme can be covalently attached. The protein is Thiol-disulfide oxidoreductase ResA of Geobacillus kaustophilus (strain HTA426).